The primary structure comprises 673 residues: uncharacterized protein (673 aa).

An N-terminal signal peptide occupies residues 1–24 (MKIHNIIKIIIVVCLEGFALTSFA). 6 consecutive transmembrane segments (helical) span residues 224 to 244 (NAIG…MVLN), 253 to 273 (IALF…LGPL), 410 to 430 (IILI…LYFI), 436 to 456 (CMIT…MMLF), 469 to 489 (VSLS…LLIT), and 562 to 582 (VVSI…FYYF). The interval 624–673 (AQATQGKPPSSGDMPGDGGSKRSEGQKGDDSFISSGGNSSGDSLSSSGGK) is disordered. The segment covering 642 to 653 (GSKRSEGQKGDD) has biased composition (basic and acidic residues). Positions 654–673 (SFISSGGNSSGDSLSSSGGK) are enriched in low complexity.

It belongs to the TrbL/VirB6 family.

It localises to the cell membrane. This is an uncharacterized protein from Rickettsia bellii (strain RML369-C).